Reading from the N-terminus, the 363-residue chain is MTNKTYKIAVLPGDGIGPEVMEQAHKVLDAIEKKHAISFSREQHDVGGIAIDNHGCPLPESTVKGCEESDAVLFGSVGGPKWEHLPPNDQPERGALLPLRKHFQLFCNLRPAQIHKGLENFSPLRADISERGFDIVVVRELTGGIYFGQPKGREGEGPQEKAYDTEIYHRYEIERIAKIAFESARLRNKNVYSIDKANVLQSSILWREVVEEVAKGYPDVTLNHMYIDNATMQLIKDPSQFDVMLCSNIFGDIISDECAMITGSMGMLPSASLNESNFGLYEPAGGSAPDIAGKNIANPVAQILSAALMLRYSLGEEEAAQSIEAAVSKALSAGELTADLAGDKPALTTSAMGDKIAEYILNS.

79–92 (GPKWEHLPPNDQPE) provides a ligand contact to NAD(+). Substrate contacts are provided by arginine 100, arginine 110, arginine 139, and aspartate 228. 3 residues coordinate Mg(2+): aspartate 228, aspartate 252, and aspartate 256. Residue 286-298 (GSAPDIAGKNIAN) participates in NAD(+) binding.

This sequence belongs to the isocitrate and isopropylmalate dehydrogenases family. LeuB type 1 subfamily. As to quaternary structure, homodimer. Mg(2+) serves as cofactor. The cofactor is Mn(2+).

The protein resides in the cytoplasm. The enzyme catalyses (2R,3S)-3-isopropylmalate + NAD(+) = 4-methyl-2-oxopentanoate + CO2 + NADH. It participates in amino-acid biosynthesis; L-leucine biosynthesis; L-leucine from 3-methyl-2-oxobutanoate: step 3/4. Its function is as follows. Catalyzes the oxidation of 3-carboxy-2-hydroxy-4-methylpentanoate (3-isopropylmalate) to 3-carboxy-4-methyl-2-oxopentanoate. The product decarboxylates to 4-methyl-2 oxopentanoate. The chain is 3-isopropylmalate dehydrogenase from Aliivibrio fischeri (strain ATCC 700601 / ES114) (Vibrio fischeri).